Here is a 99-residue protein sequence, read N- to C-terminus: Malonate decarboxylase acyl carrier protein (99 aa).

O-(phosphoribosyl dephospho-coenzyme A)serine is present on Ser25.

In terms of processing, covalently binds the prosthetic group of malonate decarboxylase.

Its subcellular location is the cytoplasm. Functionally, subunit of malonate decarboxylase, it is an acyl carrier protein to which acetyl and malonyl thioester residues are bound via a 2'-(5''-phosphoribosyl)-3'-dephospho-CoA prosthetic group and turn over during the catalytic mechanism. The sequence is that of Malonate decarboxylase acyl carrier protein (mdcC) from Klebsiella pneumoniae.